A 511-amino-acid chain; its full sequence is Ribose import ATP-binding protein RbsA (511 aa).

ABC transporter domains follow at residues valine 13 to alanine 249 and alanine 260 to alanine 503. Glycine 45–serine 52 is an ATP binding site.

The protein belongs to the ABC transporter superfamily. Ribose importer (TC 3.A.1.2.1) family. In terms of assembly, the complex is composed of an ATP-binding protein (RbsA), two transmembrane proteins (RbsC) and a solute-binding protein (RbsB).

It is found in the cell inner membrane. It carries out the reaction D-ribose(out) + ATP + H2O = D-ribose(in) + ADP + phosphate + H(+). Part of the ABC transporter complex RbsABC involved in ribose import. Responsible for energy coupling to the transport system. The sequence is that of Ribose import ATP-binding protein RbsA from Roseobacter denitrificans (strain ATCC 33942 / OCh 114) (Erythrobacter sp. (strain OCh 114)).